The primary structure comprises 918 residues: MIKTRIEEVQLQFLTGNTELTHLKVSNDQLIVTTQRTIYRINLQDPAIVNHFDCPLSKELETIMNVHVSPMGSVILIRTNFGRYMLLKDGEFTQLNKIKNLDLSSLHWINETTFLMGIKKTPKLYRVELTGKDITTKLWYENKKLSGGIDGIAYWEGSLLLTIKDNILYWRDVTNMKFPLVLPDESEQFERLKHHAIKKFDSYNGLFAWVTSNGIVFGDLKEKQMEKDPASNNFGKFLSSSKVLLNFELPDYQNDKDHLIKDIVLTAFHILLLRKNTVTMVSQLNNDVVFHETIPRHQLTGSNTDSNEKFLGLVRDSVKETFWCFSNINVFEIIIENEPNSVWNLLVRDNKFDKALSLKGLTVREIESVKLSKAMYLFHTAKDFHSAAQTLGSMKDLSHFGEIALNFLQIKDYNDLNVILIKQLDNVPWKSTQVVLSSWIIWNFMKQLNDIELKINTTKPASTDEDNLLNWNLNLKEKSNELTKFLESHLEKLDNETVYQIMSKQNRQNELLIFASLINDMKFLLSFWIDQGNWYESLKILLTINNHDLVYKYSLILLLNSPEATVSTWMKIKDLDPNKLIPTILKFFTNWQNNSKLITNISEYPENYSLTYLKWCVREVPKMCNPIVYNSILYMMITDPRNDMILENDIIKFMKSNENKYDLNFQLRLSLKFKKTKTSIFLLTRLNLFEDAIDLALKNNLIDDCKVIVNDEILIEDYKLRKRLWLKIAKHLLLSMKDIDIKQLIRTILNDSNEILTIKDLLPFFNEYTTIANLKEELIKFLENHNMKMNEISEDIINSKNLKVEINTEISKFNEIYRILEPGKSCDECGKFLQIKKFIVFPCGHCFHWNCIIRVILNSNDYNLRQKTENFLKAKSKHNLNDLENIIVEKCGLCSDININKIDQPISIDETELAKWNE.

A CHCR repeat occupies 585–741; it reads LKFFTNWQNN…LLLSMKDIDI (157 aa). An RING-type; atypical zinc finger spans residues 826–851; sequence CDECGKFLQIKKFIVFPCGHCFHWNC. Serine 907 is subject to Phosphoserine.

The protein belongs to the VPS18 family. As to quaternary structure, component of the HOPS complex which is composed of PEP5, VPS16, PEP3, VPS33, VPS39 and VPS41. HOPS associates with phosphoinositides and the PX domain of VAM7. Interacts with PEP5, PEP7 and VAM7.

It is found in the vacuole membrane. Its function is as follows. Required for vacuolar biogenesis and for trafficking of hydrolase precursors to the vacuole. Mediates transport at the vacuolar membrane where it may be responsible for tethering transport vesicles on the target membranes. Acts as a component of the HOPS complex that acts during the docking stage of vacuole fusion. HOPS is an effector for the vacuolar Rab GTPase YPT7 and is required for vacuolar SNARE complex assembly. It remains bound to SNARE complexes after vacuole fusion. This is Vacuolar membrane protein PEP3 (PEP3) from Saccharomyces cerevisiae (strain ATCC 204508 / S288c) (Baker's yeast).